Reading from the N-terminus, the 329-residue chain is Holliday junction branch migration complex subunit RuvB (329 aa).

The tract at residues 1–181 (MNELLHQHKA…FGIPLHLEFY (181 aa)) is large ATPase domain (RuvB-L). Residues L20, R21, G62, K65, T66, T67, R171, Y181, and R218 each contribute to the ATP site. T66 is a binding site for Mg(2+). Residues 182–252 (SVEELMLVIK…FADSALFNLG (71 aa)) are small ATPAse domain (RuvB-S). The tract at residues 255 to 329 (KSGLDKMDIK…IEHLMNYKYI (75 aa)) is head domain (RuvB-H). Positions 308 and 313 each coordinate DNA.

Belongs to the RuvB family. Homohexamer. Forms an RuvA(8)-RuvB(12)-Holliday junction (HJ) complex. HJ DNA is sandwiched between 2 RuvA tetramers; dsDNA enters through RuvA and exits via RuvB. An RuvB hexamer assembles on each DNA strand where it exits the tetramer. Each RuvB hexamer is contacted by two RuvA subunits (via domain III) on 2 adjacent RuvB subunits; this complex drives branch migration. In the full resolvosome a probable DNA-RuvA(4)-RuvB(12)-RuvC(2) complex forms which resolves the HJ.

It localises to the cytoplasm. The enzyme catalyses ATP + H2O = ADP + phosphate + H(+). The RuvA-RuvB-RuvC complex processes Holliday junction (HJ) DNA during genetic recombination and DNA repair, while the RuvA-RuvB complex plays an important role in the rescue of blocked DNA replication forks via replication fork reversal (RFR). RuvA specifically binds to HJ cruciform DNA, conferring on it an open structure. The RuvB hexamer acts as an ATP-dependent pump, pulling dsDNA into and through the RuvAB complex. RuvB forms 2 homohexamers on either side of HJ DNA bound by 1 or 2 RuvA tetramers; 4 subunits per hexamer contact DNA at a time. Coordinated motions by a converter formed by DNA-disengaged RuvB subunits stimulates ATP hydrolysis and nucleotide exchange. Immobilization of the converter enables RuvB to convert the ATP-contained energy into a lever motion, pulling 2 nucleotides of DNA out of the RuvA tetramer per ATP hydrolyzed, thus driving DNA branch migration. The RuvB motors rotate together with the DNA substrate, which together with the progressing nucleotide cycle form the mechanistic basis for DNA recombination by continuous HJ branch migration. Branch migration allows RuvC to scan DNA until it finds its consensus sequence, where it cleaves and resolves cruciform DNA. The protein is Holliday junction branch migration complex subunit RuvB of Anaplasma phagocytophilum (strain HZ).